Consider the following 118-residue polypeptide: Large ribosomal subunit protein bL20 (118 aa).

The protein belongs to the bacterial ribosomal protein bL20 family.

Binds directly to 23S ribosomal RNA and is necessary for the in vitro assembly process of the 50S ribosomal subunit. It is not involved in the protein synthesizing functions of that subunit. This is Large ribosomal subunit protein bL20 from Tolumonas auensis (strain DSM 9187 / NBRC 110442 / TA 4).